A 226-amino-acid chain; its full sequence is MAAVLSPITRQVSKEPRELQRVCVDIRLEDVQDCLVYDRRGGSVPFKNLYQHTKSVIIFVRNFLCYACKEYVEDLSKIPEDVFEGKVLGIRLIVIGQSMHHHIEAFCTLTGYPYEIYVDPDRHIYQKLGMKREETFTDSAQPSPHVKSGIFAGQMKSIWRAMTGPIFDFQGDLHQQGGAIIVGPGAQVHFCHFDTNRLDHMPINWLLQLAGVQQTLDFSKPKIMHV.

This sequence belongs to the peroxiredoxin-like PRXL2 family. PRXL2C subfamily.

This chain is Peroxiredoxin-like 2C (prxl2c), found in Takifugu rubripes (Japanese pufferfish).